The primary structure comprises 99 residues: Ubiquitin-related modifier 1 homolog (99 aa).

Gly99 bears the 1-thioglycine mark. Gly99 is covalently cross-linked (Glycyl lysine isopeptide (Gly-Lys) (interchain with K-? in acceptor proteins)).

It belongs to the URM1 family. As to quaternary structure, interacts with cer. In terms of processing, C-terminal thiocarboxylation occurs in 2 steps, it is first acyl-adenylated (-COAMP) via the hesA/moeB/thiF part of the MOCS3 homolog, then thiocarboxylated (-COSH) via the rhodanese domain of the MOCS3 homolog.

The protein localises to the cytoplasm. Its pathway is tRNA modification; 5-methoxycarbonylmethyl-2-thiouridine-tRNA biosynthesis. Acts as a sulfur carrier required for 2-thiolation of mcm(5)S(2)U at tRNA wobble positions of cytosolic tRNA(Lys), tRNA(Glu) and tRNA(Gln). Serves as sulfur donor in tRNA 2-thiolation reaction by being thiocarboxylated (-COSH) at its C-terminus by MOCS3. The sulfur is then transferred to tRNA to form 2-thiolation of mcm(5)S(2)U. Also acts as a ubiquitin-like protein (UBL) that is covalently conjugated via an isopeptide bond to lysine residues of target proteins such as Prx2/Jafrac1, Ciao1, Eip71CD and GILT1. The thiocarboxylated form serves as substrate for conjugation and oxidative stress specifically induces the formation of UBL-protein conjugates. This is Ubiquitin-related modifier 1 homolog from Drosophila persimilis (Fruit fly).